Here is a 417-residue protein sequence, read N- to C-terminus: Fructose-1,6-bisphosphatase 1, chloroplastic (417 aa).

A chloroplast-targeting transit peptide spans 1–59 (MAATAATTTSSHLLLSSSRHVASSSQPSILSPRSLFSNNGKRAPTGVRNHQYASGVRCM). The span at 24–35 (SSQPSILSPRSL) shows a compositional bias: low complexity. Residues 24 to 48 (SSQPSILSPRSLFSNNGKRAPTGVR) are disordered. At Ala-60 the chain carries N-acetylalanine. Residues Glu-138, Glu-167, Asp-188, Leu-190, and Asp-191 each contribute to the Mg(2+) site. 191–194 (DGSS) serves as a coordination point for substrate. The cysteines at positions 233 and 238 are disulfide-linked. Positions 297, 329, 347, 349, and 359 each coordinate substrate. Position 365 (Glu-365) interacts with Mg(2+).

This sequence belongs to the FBPase class 1 family. In terms of assembly, homotetramer. Mg(2+) is required as a cofactor.

It is found in the plastid. It localises to the chloroplast stroma. It carries out the reaction beta-D-fructose 1,6-bisphosphate + H2O = beta-D-fructose 6-phosphate + phosphate. Its pathway is carbohydrate biosynthesis; Calvin cycle. Functionally, catalyzes the irreversible reaction from fructose-1,6-bisphosphate to fructose-6-phosphate and inorganic phosphate, to regenerate the primary CO(2) acceptor molecule, ribulose-1,5-bisphosphate. Involved in the regulation of photosynthetic electron flow and sucrose synthesis. Its activity is critical for normal plant development and important for the regulation of a wide range of metabolic processes. This Arabidopsis thaliana (Mouse-ear cress) protein is Fructose-1,6-bisphosphatase 1, chloroplastic.